A 363-amino-acid polypeptide reads, in one-letter code: Endopolygalacturonase B (363 aa).

The first 20 residues, 1–20 (MQLLQSSVIAATVGAALVAA), serve as a signal peptide directing secretion. Positions 21–28 (VPVELKAR) are excised as a propeptide. The cysteines at positions 31 and 46 are disulfide-linked. PbH1 repeat units lie at residues 158 to 187 (SDNL…DVGS), 188 to 209 (STYI…AINS), 210 to 230 (GSHI…SIGS), 239 to 260 (VEDV…RIKT), 268 to 290 (VSNV…IVEQ), and 302 to 347 (TNGI…SITG). Asn-162 is a glycosylation site (N-linked (GlcNAc...) asparagine). Residue Asp-202 is the Proton donor of the active site. An intrachain disulfide couples Cys-204 to Cys-220. Residue His-224 is part of the active site. Intrachain disulfides connect Cys-330-Cys-335 and Cys-354-Cys-363. N-linked (GlcNAc...) asparagine glycosylation occurs at Asn-356.

The protein belongs to the glycosyl hydrolase 28 family.

Its subcellular location is the secreted. The catalysed reaction is (1,4-alpha-D-galacturonosyl)n+m + H2O = (1,4-alpha-D-galacturonosyl)n + (1,4-alpha-D-galacturonosyl)m.. Functionally, involved in maceration and soft-rotting of plant tissue. Hydrolyzes the 1,4-alpha glycosidic bonds of de-esterified pectate in the smooth region of the plant cell wall. This chain is Endopolygalacturonase B (pgaB), found in Aspergillus oryzae (strain ATCC 42149 / RIB 40) (Yellow koji mold).